A 254-amino-acid chain; its full sequence is MGFVYYVTLFVFIDDWVGLQSSAGKLNALLFSLLASLCLFSLSICVLVDPGRVPASYAPDVEDSGWSNSNVTETRKCDKCFAYKPLRTHHCRVCRRCVLKMDHHCLWINNCVGYANYKAFFILVFYATVASIYSTVLLVCCAFKNGDSYAGNVPLKTFIVSCGIFMIGLSITLGTLLCWHIYLITHNMTTIEHYDSKRASWLARKSGQSYRHQFDVGFYKNLTSVLGPNMIKWLCPTFTRNPEDGISFSASRDS.

2 consecutive transmembrane segments (helical) span residues 1-21 (MGFVYYVTLFVFIDDWVGLQS) and 28-48 (ALLFSLLASLCLFSLSICVLV). The region spanning 75 to 125 (RKCDKCFAYKPLRTHHCRVCRRCVLKMDHHCLWINNCVGYANYKAFFILVF) is the DHHC domain. Cysteine 105 serves as the catalytic S-palmitoyl cysteine intermediate. The next 2 helical transmembrane spans lie at 119 to 139 (AFFILVFYATVASIYSTVLLV) and 164 to 184 (IFMIGLSITLGTLLCWHIYLI).

Belongs to the DHHC palmitoyltransferase family.

It localises to the endoplasmic reticulum membrane. The protein localises to the cytoplasmic vesicle membrane. It catalyses the reaction L-cysteinyl-[protein] + hexadecanoyl-CoA = S-hexadecanoyl-L-cysteinyl-[protein] + CoA. In terms of biological role, palmitoyl acyltransferase. In Arabidopsis thaliana (Mouse-ear cress), this protein is Probable protein S-acyltransferase 15 (PAT15).